A 588-amino-acid polypeptide reads, in one-letter code: MFS siderochrome iron transporter 1 (588 aa).

The next 13 membrane-spanning stretches (helical) occupy residues 60 to 80, 104 to 124, 133 to 153, 161 to 181, 191 to 211, 225 to 245, 278 to 298, 307 to 327, 348 to 368, 385 to 405, 413 to 433, 440 to 460, and 473 to 495; these read QVWS…ITFV, LTAS…LPLA, PQGF…MAAC, AAQV…SIFI, ALMF…GGPL, YGAF…VFAW, IIGI…FSLY, SSLV…FALY, LGAC…DSYF, YIVN…GILV, WLAL…MITF, IGYI…CVIT, and YVAV…GQTV. The N-linked (GlcNAc...) asparagine glycan is linked to Asn-519. A helical membrane pass occupies residues 552–572; it reads KYMLIGGTAILAVGLGATMMW.

Belongs to the major facilitator superfamily.

The protein localises to the membrane. Functionally, major facilitator transporter involved in siderophore transport. The protein is MFS siderochrome iron transporter 1 of Ajellomyces capsulatus (Darling's disease fungus).